We begin with the raw amino-acid sequence, 769 residues long: Neutral alpha-glucosidase C (769 aa).

Residue Asp-366 is the Nucleophile of the active site. Residue Glu-369 is part of the active site. Asp-442 (proton donor) is an active-site residue.

This sequence belongs to the glycosyl hydrolase 31 family.

It carries out the reaction Hydrolysis of terminal, non-reducing (1-&gt;4)-linked alpha-D-glucose residues with release of alpha-D-glucose.. In terms of biological role, has alpha-glucosidase activity. This chain is Neutral alpha-glucosidase C (GANC), found in Macaca fascicularis (Crab-eating macaque).